A 443-amino-acid chain; its full sequence is Glutamyl-tRNA reductase (443 aa).

Residues 49-52, Ser109, 114-116, and Gln120 contribute to the substrate site; these read TCNR and ETQ. Cys50 acts as the Nucleophile in catalysis. NADP(+) is bound at residue 189–194; sequence GAGKMS.

The protein belongs to the glutamyl-tRNA reductase family. In terms of assembly, homodimer.

The catalysed reaction is (S)-4-amino-5-oxopentanoate + tRNA(Glu) + NADP(+) = L-glutamyl-tRNA(Glu) + NADPH + H(+). The protein operates within porphyrin-containing compound metabolism; protoporphyrin-IX biosynthesis; 5-aminolevulinate from L-glutamyl-tRNA(Glu): step 1/2. Catalyzes the NADPH-dependent reduction of glutamyl-tRNA(Glu) to glutamate 1-semialdehyde (GSA). This Heliobacterium mobile (Heliobacillus mobilis) protein is Glutamyl-tRNA reductase.